A 346-amino-acid polypeptide reads, in one-letter code: Putative D-threonate 4-phosphate dehydrogenase (346 aa).

Residues His141 and Thr142 each contribute to the substrate site. Residues His171, His215, and His270 each coordinate a divalent metal cation. Lys278 and Arg296 together coordinate substrate.

This sequence belongs to the PdxA family. PdxA2 subfamily. In terms of assembly, homodimer. A divalent metal cation serves as cofactor.

The catalysed reaction is 4-O-phospho-D-threonate + NAD(+) = dihydroxyacetone phosphate + CO2 + NADH. Catalyzes the NAD-dependent oxidation and subsequent decarboxylation of D-threonate 4-phosphate to produce dihydroxyacetone phosphate (DHAP). The chain is Putative D-threonate 4-phosphate dehydrogenase from Cutibacterium acnes (strain DSM 16379 / KPA171202) (Propionibacterium acnes).